Reading from the N-terminus, the 425-residue chain is MGKPTLPPVVVVVVLLLLVVVLPATTCGADAGGGGEAEEFQIPRDGRVLELDDGNFDAAVRAAGLLFVDFYAPWCGHCKRLAPQLDEAAPVLAGLSTPIVVAKVNADKYKKLGSKYGVDGFPTLMLFDHGTPTEYTGSRKADLLVENLKKLVAPDVSVLESDSAIKSFVEDAGMGFPLFLGFGVDESLIVEYGAKYKNRAWFSVAKDFSEDMMVFYDFDKVPALVSVNPKYREQSIFYGPFDDGAFLEDFIRNSLLPLVVPMNRETVKMLNDDGRKVVLMILQDDESDENSPRLIKVLRSAASANRDLVFGYVGVNQWEEFTETFDVKSSELPTMIVWDKKEEYEIVEGSERLEEGDYGSQISRFLEGYRAGRTIKKKVGDRSPTLLGVNAVYILVFLVAVLVLLMYFSGQGEEDQRPRQRAHED.

An N-terminal signal peptide occupies residues 1 to 28; the sequence is MGKPTLPPVVVVVVLLLLVVVLPATTCG. The 125-residue stretch at 29–153 folds into the Thioredoxin domain; the sequence is ADAGGGGEAE…LVENLKKLVA (125 aa). Active-site nucleophile residues include C75 and C78. C75 and C78 are disulfide-bonded. A helical transmembrane segment spans residues 386-406; the sequence is LLGVNAVYILVFLVAVLVLLM.

This sequence belongs to the protein disulfide isomerase family.

The protein localises to the membrane. Functionally, acts as a protein-folding catalyst that interacts with nascent polypeptides to catalyze the formation, isomerization, and reduction or oxidation of disulfide bonds. May play a role in storage protein biogenesis. In Oryza sativa subsp. japonica (Rice), this protein is Protein disulfide isomerase-like 5-3 (PDIL5-3).